Here is a 230-residue protein sequence, read N- to C-terminus: Probable C4-dicarboxylate response regulator DctR (230 aa).

Positions 8–124 constitute a Response regulatory domain; that stretch reads RVLLIEDDPM…RLKAALTQYE (117 aa). 4-aspartylphosphate is present on Asp-59. The segment at residues 183–209 is a DNA-binding region (H-T-H motif); the sequence is EEIGRDVGLARVTVRRYLNYLESVGQV.

In terms of processing, phosphorylated by DctS.

The protein localises to the cytoplasm. Its function is as follows. Member of the two-component regulatory system DctS/DctR. Essential for expression of DctP. The protein is Probable C4-dicarboxylate response regulator DctR (dctR) of Halalkalibacterium halodurans (strain ATCC BAA-125 / DSM 18197 / FERM 7344 / JCM 9153 / C-125) (Bacillus halodurans).